Here is a 306-residue protein sequence, read N- to C-terminus: Ribosomal protein L11 methyltransferase (306 aa).

Positions 154, 179, 201, and 242 each coordinate S-adenosyl-L-methionine.

Belongs to the methyltransferase superfamily. PrmA family.

The protein resides in the cytoplasm. The catalysed reaction is L-lysyl-[protein] + 3 S-adenosyl-L-methionine = N(6),N(6),N(6)-trimethyl-L-lysyl-[protein] + 3 S-adenosyl-L-homocysteine + 3 H(+). In terms of biological role, methylates ribosomal protein L11. The chain is Ribosomal protein L11 methyltransferase from Stenotrophomonas maltophilia (strain R551-3).